The sequence spans 626 residues: UPF0313 protein MM_1287 (626 aa).

The tract at residues 206-227 (GKGKEKAGEQDESENATEEVAK) is disordered. The region spanning 320-589 (ALEMVKFSLT…AMQRALMHYR (270 aa)) is the Radical SAM core domain. [4Fe-4S] cluster contacts are provided by cysteine 334, cysteine 338, and cysteine 341.

This sequence belongs to the UPF0313 family. The cofactor is [4Fe-4S] cluster.

The sequence is that of UPF0313 protein MM_1287 from Methanosarcina mazei (strain ATCC BAA-159 / DSM 3647 / Goe1 / Go1 / JCM 11833 / OCM 88) (Methanosarcina frisia).